We begin with the raw amino-acid sequence, 336 residues long: Anthranilate phosphoribosyltransferase (336 aa).

Residues glycine 79, 82–83, threonine 87, 89–92, 107–115, and serine 119 contribute to the 5-phospho-alpha-D-ribose 1-diphosphate site; these read GD, NIST, and KHGNRSVSS. Glycine 79 provides a ligand contact to anthranilate. Serine 91 serves as a coordination point for Mg(2+). Asparagine 110 is an anthranilate binding site. Arginine 165 contributes to the anthranilate binding site. Positions 224 and 225 each coordinate Mg(2+).

This sequence belongs to the anthranilate phosphoribosyltransferase family. In terms of assembly, homodimer. It depends on Mg(2+) as a cofactor.

The catalysed reaction is N-(5-phospho-beta-D-ribosyl)anthranilate + diphosphate = 5-phospho-alpha-D-ribose 1-diphosphate + anthranilate. It participates in amino-acid biosynthesis; L-tryptophan biosynthesis; L-tryptophan from chorismate: step 2/5. Functionally, catalyzes the transfer of the phosphoribosyl group of 5-phosphorylribose-1-pyrophosphate (PRPP) to anthranilate to yield N-(5'-phosphoribosyl)-anthranilate (PRA). In Endomicrobium trichonymphae, this protein is Anthranilate phosphoribosyltransferase.